A 94-amino-acid polypeptide reads, in one-letter code: Phosphoribosyl-ATP pyrophosphatase (94 aa).

The protein belongs to the PRA-PH family.

It localises to the cytoplasm. It carries out the reaction 1-(5-phospho-beta-D-ribosyl)-ATP + H2O = 1-(5-phospho-beta-D-ribosyl)-5'-AMP + diphosphate + H(+). It functions in the pathway amino-acid biosynthesis; L-histidine biosynthesis; L-histidine from 5-phospho-alpha-D-ribose 1-diphosphate: step 2/9. This chain is Phosphoribosyl-ATP pyrophosphatase, found in Pyrobaculum arsenaticum (strain DSM 13514 / JCM 11321 / PZ6).